Consider the following 341-residue polypeptide: Phosphatidylserine decarboxylase proenzyme (341 aa).

Catalysis depends on charge relay system; for autoendoproteolytic cleavage activity residues aspartate 90, histidine 147, and serine 254. Residue serine 254 is the Schiff-base intermediate with substrate; via pyruvic acid; for decarboxylase activity of the active site. Serine 254 bears the Pyruvic acid (Ser); by autocatalysis mark. The segment at 287–341 (RQDEQTPVVFPEGTELEENDAAQPPVAATSEPVQADGQNPAAEVSGQTGHKPDAP) is disordered.

This sequence belongs to the phosphatidylserine decarboxylase family. PSD-B subfamily. Prokaryotic type I sub-subfamily. As to quaternary structure, heterodimer of a large membrane-associated beta subunit and a small pyruvoyl-containing alpha subunit. It depends on pyruvate as a cofactor. In terms of processing, is synthesized initially as an inactive proenzyme. Formation of the active enzyme involves a self-maturation process in which the active site pyruvoyl group is generated from an internal serine residue via an autocatalytic post-translational modification. Two non-identical subunits are generated from the proenzyme in this reaction, and the pyruvate is formed at the N-terminus of the alpha chain, which is derived from the carboxyl end of the proenzyme. The autoendoproteolytic cleavage occurs by a canonical serine protease mechanism, in which the side chain hydroxyl group of the serine supplies its oxygen atom to form the C-terminus of the beta chain, while the remainder of the serine residue undergoes an oxidative deamination to produce ammonia and the pyruvoyl prosthetic group on the alpha chain. During this reaction, the Ser that is part of the protease active site of the proenzyme becomes the pyruvoyl prosthetic group, which constitutes an essential element of the active site of the mature decarboxylase.

Its subcellular location is the cell membrane. It carries out the reaction a 1,2-diacyl-sn-glycero-3-phospho-L-serine + H(+) = a 1,2-diacyl-sn-glycero-3-phosphoethanolamine + CO2. It functions in the pathway phospholipid metabolism; phosphatidylethanolamine biosynthesis; phosphatidylethanolamine from CDP-diacylglycerol: step 2/2. Its function is as follows. Catalyzes the formation of phosphatidylethanolamine (PtdEtn) from phosphatidylserine (PtdSer). The chain is Phosphatidylserine decarboxylase proenzyme from Pectobacterium atrosepticum (strain SCRI 1043 / ATCC BAA-672) (Erwinia carotovora subsp. atroseptica).